The chain runs to 339 residues: GTPase Era (339 aa).

Residues 4 to 48 enclose the RPE1 insert domain; sequence RHLAKFAYREEFKGDTEALAAAVREDASTGSTSQLPLEVQFGKMS. An Era-type G domain is found at 51-220; it reads KTVSVCIIGR…ITSKAKISPW (170 aa). Residues 59–66 form a G1 region; it reads GRPNSGKS. Residue 59–66 coordinates GTP; sequence GRPNSGKS. A G2 region spans residues 85-89; it reads QTTRS. A G3 region spans residues 106 to 109; it reads DTPG. Residues 106 to 110 and 168 to 171 contribute to the GTP site; these read DTPGI and NKID. The segment at 168–171 is G4; that stretch reads NKID. Positions 196 to 198 are G5; it reads ISA. A KH type-2 domain is found at 248 to 325; sequence LQKELPYKLT…HLFLFVKVRE (78 aa).

This sequence belongs to the TRAFAC class TrmE-Era-EngA-EngB-Septin-like GTPase superfamily. Era GTPase family. In terms of assembly, monomer.

It is found in the cytoplasm. It localises to the cell inner membrane. Functionally, an essential GTPase that binds both GDP and GTP, with rapid nucleotide exchange. Plays a role in 16S rRNA processing and 30S ribosomal subunit biogenesis and possibly also in cell cycle regulation and energy metabolism. This Rickettsia conorii (strain ATCC VR-613 / Malish 7) protein is GTPase Era.